Here is a 340-residue protein sequence, read N- to C-terminus: Holliday junction branch migration complex subunit RuvB (340 aa).

Residues 1–184 (MNENLDPTNQ…FGIQSRLQYY (184 aa)) are large ATPase domain (RuvB-L). Residues Leu23, Arg24, Gly65, Lys68, Thr69, Thr70, 131–133 (EDF), Arg174, Tyr184, and Arg221 each bind ATP. Mg(2+) is bound at residue Thr69. Residues 185-255 (NAELLTTIVQ…IAKFALNALH (71 aa)) are small ATPAse domain (RuvB-S). Residues 258-340 (AHGLDEMDNK…VKANVQGGLF (83 aa)) are head domain (RuvB-H). Residues Arg313 and Arg318 each contribute to the DNA site.

It belongs to the RuvB family. Homohexamer. Forms an RuvA(8)-RuvB(12)-Holliday junction (HJ) complex. HJ DNA is sandwiched between 2 RuvA tetramers; dsDNA enters through RuvA and exits via RuvB. An RuvB hexamer assembles on each DNA strand where it exits the tetramer. Each RuvB hexamer is contacted by two RuvA subunits (via domain III) on 2 adjacent RuvB subunits; this complex drives branch migration. In the full resolvosome a probable DNA-RuvA(4)-RuvB(12)-RuvC(2) complex forms which resolves the HJ.

It localises to the cytoplasm. It carries out the reaction ATP + H2O = ADP + phosphate + H(+). In terms of biological role, the RuvA-RuvB-RuvC complex processes Holliday junction (HJ) DNA during genetic recombination and DNA repair, while the RuvA-RuvB complex plays an important role in the rescue of blocked DNA replication forks via replication fork reversal (RFR). RuvA specifically binds to HJ cruciform DNA, conferring on it an open structure. The RuvB hexamer acts as an ATP-dependent pump, pulling dsDNA into and through the RuvAB complex. RuvB forms 2 homohexamers on either side of HJ DNA bound by 1 or 2 RuvA tetramers; 4 subunits per hexamer contact DNA at a time. Coordinated motions by a converter formed by DNA-disengaged RuvB subunits stimulates ATP hydrolysis and nucleotide exchange. Immobilization of the converter enables RuvB to convert the ATP-contained energy into a lever motion, pulling 2 nucleotides of DNA out of the RuvA tetramer per ATP hydrolyzed, thus driving DNA branch migration. The RuvB motors rotate together with the DNA substrate, which together with the progressing nucleotide cycle form the mechanistic basis for DNA recombination by continuous HJ branch migration. Branch migration allows RuvC to scan DNA until it finds its consensus sequence, where it cleaves and resolves cruciform DNA. The sequence is that of Holliday junction branch migration complex subunit RuvB from Flavobacterium psychrophilum (strain ATCC 49511 / DSM 21280 / CIP 103535 / JIP02/86).